The primary structure comprises 236 residues: Osmoprotectant import permease protein OsmY (236 aa).

6 consecutive transmembrane segments (helical) span residues 9-29 (VLGF…GIGL), 47-67 (LMLV…SGIL), 95-115 (VLAL…VALF), 126-146 (TYAG…GIGM), 180-200 (PLAF…GIYL), and 207-227 (ILGA…LAWF). The ABC transmembrane type-1 domain occupies 43-224 (GQRHLMLVFT…LFALILDTLL (182 aa)).

Belongs to the binding-protein-dependent transport system permease family. The complex is composed of two ATP-binding proteins (OsmV), two transmembrane proteins (OsmW and OsmY) and a solute-binding protein (OsmX).

Its subcellular location is the cell inner membrane. Its function is as follows. Part of the OsmU ABC transporter complex, which is involved in the uptake of osmoprotectants such as choline-O-sulfate and glycine betaine. Probably responsible for the translocation of the substrate across the membrane. The protein is Osmoprotectant import permease protein OsmY (osmY) of Salmonella typhimurium (strain LT2 / SGSC1412 / ATCC 700720).